We begin with the raw amino-acid sequence, 407 residues long: Accessory Sec system protein translocase subunit SecY2 (407 aa).

Helical transmembrane passes span 13 to 33, 65 to 85, 104 to 124, 133 to 153, 158 to 178, 190 to 210, 248 to 268, 287 to 307, 345 to 365, and 370 to 390; these read FLWTLFFLFIYVLGTKLTLPF, LFSVGLSPWMSSMLIWQMFAV, MLLTLVIALIQSVALVLNLPL, TTIMVLDTLVLMAGTYFLIWL, AAMGLGGSIMIVMASMIAYIP, ISSLWLALMLVFSLVFLYLAV, IMYAMTLVSIPQYFLLIIHFL, PAWFILYLLTIFILALAFAFI, FALVGAFYLILISGLPMMVVL, and YLRLSMIPGIFMIFIGMVFSI.

This sequence belongs to the SecY/SEC61-alpha family. SecY2 subfamily. In terms of assembly, component of the accessory SecA2/SecY2 protein translocase complex required to export cell wall proteins. May form heterotrimers with SecE and SecG subunits.

Its subcellular location is the cell membrane. Functionally, part of the accessory SecA2/SecY2 system specifically required for export of possible cell wall proteins. The central subunit of a protein translocation channel. This is Accessory Sec system protein translocase subunit SecY2 from Streptococcus sanguinis (strain SK36).